A 289-amino-acid chain; its full sequence is Oxaloacetate decarboxylase (289 aa).

Substrate is bound at residue S50. D88 contributes to the Mg(2+) binding site. Residues R159 and H235 each contribute to the substrate site.

Belongs to the isocitrate lyase/PEP mutase superfamily. Oxaloacetate decarboxylase family. As to quaternary structure, homotetramer; dimer of dimers. Mg(2+) serves as cofactor.

The enzyme catalyses oxaloacetate + H(+) = pyruvate + CO2. Its function is as follows. Catalyzes the decarboxylation of oxaloacetate into pyruvate. Seems to play a role in maintaining cellular concentrations of bicarbonate and pyruvate. The protein is Oxaloacetate decarboxylase of Pseudomonas fluorescens (strain ATCC BAA-477 / NRRL B-23932 / Pf-5).